The primary structure comprises 231 residues: Glycerol-3-phosphate acyltransferase (231 aa).

Helical transmembrane passes span 6–26 (FLFLFLFFYILGSIPTGLVIG), 55–75 (WGILVFLLDFCKGFVPLTIFL), 95–115 (LTMKISLLAISPILGHMFSLF), 130–150 (IITSFNPLIGISGIIFFAIFL), 152–172 (LFGYASLSSIMASTLVNIFLW), and 196–216 (LFYFSINFATLIIIAKHYSNI).

This sequence belongs to the PlsY family. Probably interacts with PlsX.

It is found in the cell membrane. The enzyme catalyses an acyl phosphate + sn-glycerol 3-phosphate = a 1-acyl-sn-glycero-3-phosphate + phosphate. Its pathway is lipid metabolism; phospholipid metabolism. In terms of biological role, catalyzes the transfer of an acyl group from acyl-phosphate (acyl-PO(4)) to glycerol-3-phosphate (G3P) to form lysophosphatidic acid (LPA). This enzyme utilizes acyl-phosphate as fatty acyl donor, but not acyl-CoA or acyl-ACP. The sequence is that of Glycerol-3-phosphate acyltransferase from Aster yellows witches'-broom phytoplasma (strain AYWB).